A 222-amino-acid chain; its full sequence is Cytidylate kinase (222 aa).

ATP is bound at residue 9-17 (GPSGAGKST).

This sequence belongs to the cytidylate kinase family. Type 1 subfamily.

It localises to the cytoplasm. It carries out the reaction CMP + ATP = CDP + ADP. The catalysed reaction is dCMP + ATP = dCDP + ADP. The protein is Cytidylate kinase of Thermodesulfovibrio yellowstonii (strain ATCC 51303 / DSM 11347 / YP87).